The following is a 526-amino-acid chain: Plant intracellular Ras-group-related LRR protein 5 (526 aa).

11 LRR repeats span residues 229 to 252 (LSSL…IGGL), 253 to 275 (ISLT…IGDL), 276 to 297 (LNLV…SFNR), 298 to 321 (LIHL…IGSL), 323 to 344 (SLKK…ISGC), 346 to 367 (SMEE…VGKL), 368 to 390 (STLE…MSSM), 391 to 414 (ANLK…CYAK), 416 to 437 (LVKL…LIGN), 438 to 463 (LEKL…TLSN), and 465 to 484 (RVLQ…ITEK). The short motif at 485–492 (GAQAVVQY) is the GVYW; degenerate element.

The protein belongs to the SHOC2 family. Widely expressed but preferentially in roots.

Its function is as follows. Leucine-rich repeat protein that likely mediates protein interactions, possibly in the context of signal transduction. The chain is Plant intracellular Ras-group-related LRR protein 5 (PIRL5) from Arabidopsis thaliana (Mouse-ear cress).